A 376-amino-acid polypeptide reads, in one-letter code: Succinyl-diaminopimelate desuccinylase (376 aa).

H66 serves as a coordination point for Zn(2+). D68 is an active-site residue. D99 contributes to the Zn(2+) binding site. Catalysis depends on E133, which acts as the Proton acceptor. Zn(2+)-binding residues include E134, E162, and H348.

The protein belongs to the peptidase M20A family. DapE subfamily. As to quaternary structure, homodimer. It depends on Zn(2+) as a cofactor. Requires Co(2+) as cofactor.

The catalysed reaction is N-succinyl-(2S,6S)-2,6-diaminopimelate + H2O = (2S,6S)-2,6-diaminopimelate + succinate. The protein operates within amino-acid biosynthesis; L-lysine biosynthesis via DAP pathway; LL-2,6-diaminopimelate from (S)-tetrahydrodipicolinate (succinylase route): step 3/3. Catalyzes the hydrolysis of N-succinyl-L,L-diaminopimelic acid (SDAP), forming succinate and LL-2,6-diaminopimelate (DAP), an intermediate involved in the bacterial biosynthesis of lysine and meso-diaminopimelic acid, an essential component of bacterial cell walls. The polypeptide is Succinyl-diaminopimelate desuccinylase (Xanthomonas oryzae pv. oryzae (strain PXO99A)).